Consider the following 170-residue polypeptide: Flavodoxin (170 aa).

The Flavodoxin-like domain occupies Ile4–Lys165.

The protein belongs to the flavodoxin family. FMN serves as cofactor.

In terms of biological role, low-potential electron donor to a number of redox enzymes. The protein is Flavodoxin (isiB) of Synechocystis sp. (strain ATCC 27184 / PCC 6803 / Kazusa).